Here is a 336-residue protein sequence, read N- to C-terminus: Dihydroorotate dehydrogenase (quinone) (336 aa).

Residues 62 to 66 (AGLDK) and T86 each bind FMN. K66 lines the substrate pocket. Residue 111–115 (NRMGF) coordinates substrate. FMN contacts are provided by N139 and N172. Residue N172 coordinates substrate. S175 functions as the Nucleophile in the catalytic mechanism. Residue N177 participates in substrate binding. Residues K217 and T245 each contribute to the FMN site. 246-247 (NT) is a substrate binding site. Residues G268, G297, and 318-319 (YS) each bind FMN.

It belongs to the dihydroorotate dehydrogenase family. Type 2 subfamily. Monomer. FMN is required as a cofactor.

It localises to the cell membrane. It carries out the reaction (S)-dihydroorotate + a quinone = orotate + a quinol. It functions in the pathway pyrimidine metabolism; UMP biosynthesis via de novo pathway; orotate from (S)-dihydroorotate (quinone route): step 1/1. In terms of biological role, catalyzes the conversion of dihydroorotate to orotate with quinone as electron acceptor. The polypeptide is Dihydroorotate dehydrogenase (quinone) (Proteus mirabilis (strain HI4320)).